The following is a 289-amino-acid chain: Protease HtpX (289 aa).

2 helical membrane passes run 4–24 (IMLF…VLNI) and 36–56 (LSGL…ISLM). A Zn(2+)-binding site is contributed by His-143. The active site involves Glu-144. His-147 is a Zn(2+) binding site. Helical transmembrane passes span 158–178 (LMQG…ANIV) and 192–212 (MVYF…ASFL). Glu-221 contacts Zn(2+).

This sequence belongs to the peptidase M48B family. The cofactor is Zn(2+).

Its subcellular location is the cell inner membrane. The chain is Protease HtpX from Vibrio campbellii (strain ATCC BAA-1116).